The sequence spans 399 residues: Argininosuccinate synthase (399 aa).

8-16 lines the ATP pocket; sequence AYSGGLDTT. Residue tyrosine 87 participates in L-citrulline binding. Residue glycine 117 coordinates ATP. The L-aspartate site is built by threonine 119, asparagine 123, and aspartate 124. Asparagine 123 is a binding site for L-citrulline. L-citrulline contacts are provided by arginine 127, serine 175, glutamate 259, and tyrosine 271.

The protein belongs to the argininosuccinate synthase family. Type 1 subfamily. As to quaternary structure, homotetramer.

The protein localises to the cytoplasm. It catalyses the reaction L-citrulline + L-aspartate + ATP = 2-(N(omega)-L-arginino)succinate + AMP + diphosphate + H(+). The protein operates within amino-acid biosynthesis; L-arginine biosynthesis; L-arginine from L-ornithine and carbamoyl phosphate: step 2/3. The polypeptide is Argininosuccinate synthase (Corynebacterium urealyticum (strain ATCC 43042 / DSM 7109)).